Consider the following 670-residue polypeptide: DNA ligase (670 aa).

Residues 32–36 (DAYYD), 81–82 (SL), and glutamate 110 each bind NAD(+). Lysine 112 (N6-AMP-lysine intermediate) is an active-site residue. Arginine 133, glutamate 170, lysine 289, and lysine 313 together coordinate NAD(+). 4 residues coordinate Zn(2+): cysteine 407, cysteine 410, cysteine 425, and cysteine 431. In terms of domain architecture, BRCT spans 590-670 (EDELRLKGQT…ELLVFLGLAG (81 aa)).

The protein belongs to the NAD-dependent DNA ligase family. LigA subfamily. The cofactor is Mg(2+). Mn(2+) is required as a cofactor.

It catalyses the reaction NAD(+) + (deoxyribonucleotide)n-3'-hydroxyl + 5'-phospho-(deoxyribonucleotide)m = (deoxyribonucleotide)n+m + AMP + beta-nicotinamide D-nucleotide.. In terms of biological role, DNA ligase that catalyzes the formation of phosphodiester linkages between 5'-phosphoryl and 3'-hydroxyl groups in double-stranded DNA using NAD as a coenzyme and as the energy source for the reaction. It is essential for DNA replication and repair of damaged DNA. The protein is DNA ligase of Shewanella denitrificans (strain OS217 / ATCC BAA-1090 / DSM 15013).